The following is a 339-amino-acid chain: Ketol-acid reductoisomerase (NADP(+)) (339 aa).

The KARI N-terminal Rossmann domain maps to 1 to 182; sequence MRVYYDRDAD…GGGRSGIIET (182 aa). Residues 24–27, K48, S51, T53, and 83–86 each bind NADP(+); these read YGSQ and DELQ. H108 is an active-site residue. G134 is an NADP(+) binding site. The 146-residue stretch at 183 to 328 folds into the KARI C-terminal knotted domain; it reads NFKEECETDL…AKLRGMMPWI (146 aa). Mg(2+) is bound by residues D191, E195, E227, and E231. Position 252 (S252) interacts with substrate.

The protein belongs to the ketol-acid reductoisomerase family. It depends on Mg(2+) as a cofactor.

It catalyses the reaction (2R)-2,3-dihydroxy-3-methylbutanoate + NADP(+) = (2S)-2-acetolactate + NADPH + H(+). The enzyme catalyses (2R,3R)-2,3-dihydroxy-3-methylpentanoate + NADP(+) = (S)-2-ethyl-2-hydroxy-3-oxobutanoate + NADPH + H(+). Its pathway is amino-acid biosynthesis; L-isoleucine biosynthesis; L-isoleucine from 2-oxobutanoate: step 2/4. The protein operates within amino-acid biosynthesis; L-valine biosynthesis; L-valine from pyruvate: step 2/4. Involved in the biosynthesis of branched-chain amino acids (BCAA). Catalyzes an alkyl-migration followed by a ketol-acid reduction of (S)-2-acetolactate (S2AL) to yield (R)-2,3-dihydroxy-isovalerate. In the isomerase reaction, S2AL is rearranged via a Mg-dependent methyl migration to produce 3-hydroxy-3-methyl-2-ketobutyrate (HMKB). In the reductase reaction, this 2-ketoacid undergoes a metal-dependent reduction by NADPH to yield (R)-2,3-dihydroxy-isovalerate. The polypeptide is Ketol-acid reductoisomerase (NADP(+)) (Sinorhizobium fredii (strain NBRC 101917 / NGR234)).